The chain runs to 454 residues: tRNA modification GTPase MnmE (454 aa).

Positions 23, 80, and 120 each coordinate (6S)-5-formyl-5,6,7,8-tetrahydrofolate. The 162-residue stretch at 216-377 folds into the TrmE-type G domain; the sequence is GMKVVIAGRP…LRNNLKQSMG (162 aa). Residue Asn226 coordinates K(+). Residues 226 to 231, 245 to 251, 270 to 273, 335 to 338, and 358 to 360 contribute to the GTP site; these read NAGKSS, TDIAGTT, DTAG, NKAD, and SAR. Ser230 is a binding site for Mg(2+). Residues Thr245, Ile247, and Thr250 each contribute to the K(+) site. Residue Thr251 participates in Mg(2+) binding. Lys454 is a binding site for (6S)-5-formyl-5,6,7,8-tetrahydrofolate.

This sequence belongs to the TRAFAC class TrmE-Era-EngA-EngB-Septin-like GTPase superfamily. TrmE GTPase family. Homodimer. Heterotetramer of two MnmE and two MnmG subunits. Requires K(+) as cofactor.

Its subcellular location is the cytoplasm. In terms of biological role, exhibits a very high intrinsic GTPase hydrolysis rate. Involved in the addition of a carboxymethylaminomethyl (cmnm) group at the wobble position (U34) of certain tRNAs, forming tRNA-cmnm(5)s(2)U34. The sequence is that of tRNA modification GTPase MnmE from Salmonella paratyphi A (strain ATCC 9150 / SARB42).